The following is a 359-amino-acid chain: DNA replication and repair protein RecF (359 aa).

30-37 (GANGSGKT) contacts ATP.

The protein belongs to the RecF family.

Its subcellular location is the cytoplasm. Functionally, the RecF protein is involved in DNA metabolism; it is required for DNA replication and normal SOS inducibility. RecF binds preferentially to single-stranded, linear DNA. It also seems to bind ATP. The protein is DNA replication and repair protein RecF of Vibrio atlanticus (strain LGP32) (Vibrio splendidus (strain Mel32)).